The primary structure comprises 247 residues: 23S rRNA (guanosine-2'-O-)-methyltransferase RlmB (247 aa).

Residues G197, I217, and L226 each contribute to the S-adenosyl-L-methionine site.

Belongs to the class IV-like SAM-binding methyltransferase superfamily. RNA methyltransferase TrmH family. RlmB subfamily.

The protein resides in the cytoplasm. It carries out the reaction guanosine(2251) in 23S rRNA + S-adenosyl-L-methionine = 2'-O-methylguanosine(2251) in 23S rRNA + S-adenosyl-L-homocysteine + H(+). Its function is as follows. Specifically methylates the ribose of guanosine 2251 in 23S rRNA. This is 23S rRNA (guanosine-2'-O-)-methyltransferase RlmB from Vibrio cholerae serotype O1 (strain ATCC 39315 / El Tor Inaba N16961).